The following is a 177-amino-acid chain: Nucleoside triphosphate/diphosphate phosphatase (177 aa).

The active-site Proton donor is R23. Mg(2+)-binding residues include N87, D103, D105, D107, D120, and E123.

This sequence belongs to the Ntdp family. The cofactor is Mg(2+).

The catalysed reaction is a ribonucleoside 5'-triphosphate + H2O = a ribonucleoside 5'-diphosphate + phosphate + H(+). The enzyme catalyses a ribonucleoside 5'-diphosphate + H2O = a ribonucleoside 5'-phosphate + phosphate + H(+). Its function is as follows. Has nucleoside phosphatase activity towards nucleoside triphosphates and nucleoside diphosphates. This is Nucleoside triphosphate/diphosphate phosphatase from Streptococcus pyogenes serotype M3 (strain ATCC BAA-595 / MGAS315).